The primary structure comprises 906 residues: Catenin alpha-1 (906 aa).

Threonine 2 carries the post-translational modification N-acetylthreonine. The interval 2 to 228 (TAVHAGNINF…PILYTASQAC (227 aa)) is involved in homodimerization. Lysine 57 is covalently cross-linked (Glycyl lysine isopeptide (Lys-Gly) (interchain with G-Cter in SUMO2)). An interaction with JUP and CTNNB1 region spans residues 97–148 (VRKQGDLMKAAAGEFADDPCSSVKRGNMVRAARALLSAVTRLLILADMADVY). A phosphoserine mark is found at serine 264, serine 268, serine 295, and serine 297. Positions 325–394 (TRDDRRERIV…AVMDHVSDSF (70 aa)) are interaction with alpha-actinin. Phosphothreonine is present on threonine 634. Position 641 is a phosphoserine; by CK2 (serine 641). Threonine 645 carries the post-translational modification Phosphothreonine. Phosphoserine; by CK1 occurs at positions 652 and 655. Position 658 is a phosphothreonine; by CK1 (threonine 658). Lysine 797 participates in a covalent cross-link: Glycyl lysine isopeptide (Lys-Gly) (interchain with G-Cter in SUMO2). Position 851 is a phosphoserine (serine 851). Basic and acidic residues predominate over residues 864–880 (PEKKPLVKREKQDETQT). The tract at residues 864 to 894 (PEKKPLVKREKQDETQTKIKRASQKKHVNPV) is disordered. Basic residues predominate over residues 881–891 (KIKRASQKKHV).

It belongs to the vinculin/alpha-catenin family. As to quaternary structure, monomer and homodimer; the monomer preferentially binds to CTNNB1 and the homodimer to actin. Component of an cadherin:catenin adhesion complex composed of at least of CDH26, beta-catenin/CTNNB1, alpha-catenin/CTNNA1 and p120 catenin/CTNND1. Possible component of an E-cadherin/ catenin adhesion complex together with E-cadherin/CDH1 and beta-catenin/CTNNB1 or gamma-catenin/JUP; the complex is located to adherens junctions. The stable association of CTNNA1 is controversial as CTNNA1 was shown not to bind to F-actin when assembled in the complex. Alternatively, the CTNNA1-containing complex may be linked to F-actin by other proteins such as LIMA1. Binds AFDN and F-actin. Interacts with ARHGAP21. Interacts with AJUBA. Interacts with LIMA1. Interacts with vinculin/VCL. Interacts with TJP2/ZO2 (via N-terminus). Interacts with TJP1/ZO1 (via N-terminus). Sumoylated. In terms of processing, phosphorylation seems to contribute to the strength of cell-cell adhesion rather than to the basic capacity for cell-cell adhesion. As to expression, ubiquitously expressed in normal tissues. In terms of tissue distribution, abundantly expressed in brain and cerebellum, also expressed in the placenta, liver, lung, colon, heart, pancreas, stomach and thymus.

It is found in the cytoplasm. It localises to the cytoskeleton. The protein resides in the cell junction. Its subcellular location is the adherens junction. The protein localises to the cell membrane. It is found in the nucleus. In terms of biological role, associates with the cytoplasmic domain of a variety of cadherins. The association of catenins to cadherins produces a complex which is linked to the actin filament network, and which seems to be of primary importance for cadherins cell-adhesion properties. Can associate with both E- and N-cadherins. Originally believed to be a stable component of E-cadherin/catenin adhesion complexes and to mediate the linkage of cadherins to the actin cytoskeleton at adherens junctions. In contrast, cortical actin was found to be much more dynamic than E-cadherin/catenin complexes and CTNNA1 was shown not to bind to F-actin when assembled in the complex suggesting a different linkage between actin and adherens junctions components. The homodimeric form may regulate actin filament assembly and inhibit actin branching by competing with the Arp2/3 complex for binding to actin filaments. Involved in the regulation of WWTR1/TAZ, YAP1 and TGFB1-dependent SMAD2 and SMAD3 nuclear accumulation. May play a crucial role in cell differentiation. This chain is Catenin alpha-1, found in Homo sapiens (Human).